The following is a 175-amino-acid chain: Disulfide bond formation protein B (175 aa).

The Cytoplasmic segment spans residues 1–13 (MTAFTRFAHSRAS). A helical transmembrane segment spans residues 14–30 (WLILTGSAIALEAAALY). At 31–48 (FQYVMKLDPCVMCIYQRL) the chain is on the periplasmic side. Cys40 and Cys43 form a disulfide bridge. The helical transmembrane segment at 49-64 (AVFGILAAGLIGMTAP) threads the bilayer. Residues 65–71 (KYRIVRI) are Cytoplasmic-facing. The chain crosses the membrane as a helical span at residues 72–89 (LGALGWAVSATWGLKLAL). Residues 90–144 (ALVDMQNNPSPFSTCSFLPEFPAWMPLHEWFPSVMLPTGMCTDVPWQFMGVTMAE) lie on the Periplasmic side of the membrane. A disulfide bridge connects residues Cys104 and Cys130. The chain crosses the membrane as a helical span at residues 145–163 (WMVVAFSGYLVALLLFIVP). Topologically, residues 164 to 175 (ILSGSNKPSLYK) are cytoplasmic.

This sequence belongs to the DsbB family.

It is found in the cell inner membrane. Functionally, required for disulfide bond formation in some periplasmic proteins. Acts by oxidizing the DsbA protein. This chain is Disulfide bond formation protein B, found in Shewanella sp. (strain MR-4).